A 286-amino-acid polypeptide reads, in one-letter code: NAD kinase (286 aa).

The active-site Proton acceptor is the D68. NAD(+) is bound by residues 68 to 69 (DG), K73, 142 to 143 (ND), R153, D172, 183 to 188 (TGYSFS), and Q242.

This sequence belongs to the NAD kinase family. Requires a divalent metal cation as cofactor.

It localises to the cytoplasm. The enzyme catalyses NAD(+) + ATP = ADP + NADP(+) + H(+). Its function is as follows. Involved in the regulation of the intracellular balance of NAD and NADP, and is a key enzyme in the biosynthesis of NADP. Catalyzes specifically the phosphorylation on 2'-hydroxyl of the adenosine moiety of NAD to yield NADP. This chain is NAD kinase, found in Natranaerobius thermophilus (strain ATCC BAA-1301 / DSM 18059 / JW/NM-WN-LF).